We begin with the raw amino-acid sequence, 563 residues long: GTPase Obg (563 aa).

The Obg domain occupies 2–168 (SDFVDRVTVH…RDVILELKSI (167 aa)). The OBG-type G domain maps to 169-349 (ADVALVGFPS…LNWALADLVT (181 aa)). GTP contacts are provided by residues 175 to 182 (GFPSAGKS), 200 to 204 (FTTLV), 221 to 224 (DVPG), 301 to 304 (NKVD), and 330 to 332 (STA). Residues S182 and T202 each coordinate Mg(2+). The OCT domain occupies 383–469 (DEGGNALDFT…DRAVEFDWDP (87 aa)). Positions 525 to 563 (MMAERKAGHWADPSVDDDRHDETSLFGRGETADDEDVEQ) are disordered.

This sequence belongs to the TRAFAC class OBG-HflX-like GTPase superfamily. OBG GTPase family. Monomer. It depends on Mg(2+) as a cofactor.

Its subcellular location is the cytoplasm. In terms of biological role, an essential GTPase which binds GTP, GDP and possibly (p)ppGpp with moderate affinity, with high nucleotide exchange rates and a fairly low GTP hydrolysis rate. Plays a role in control of the cell cycle, stress response, ribosome biogenesis and in those bacteria that undergo differentiation, in morphogenesis control. This Bifidobacterium adolescentis (strain ATCC 15703 / DSM 20083 / NCTC 11814 / E194a) protein is GTPase Obg.